Here is a 357-residue protein sequence, read N- to C-terminus: Probable butyrate kinase (357 aa).

The protein belongs to the acetokinase family.

The protein resides in the cytoplasm. The enzyme catalyses butanoate + ATP = butanoyl phosphate + ADP. This chain is Probable butyrate kinase, found in Thermotoga petrophila (strain ATCC BAA-488 / DSM 13995 / JCM 10881 / RKU-1).